A 246-amino-acid polypeptide reads, in one-letter code: Ribosomal RNA small subunit methyltransferase J (246 aa).

Residues 115 to 116 and Asp169 contribute to the S-adenosyl-L-methionine site; that span reads ER.

Belongs to the methyltransferase superfamily. RsmJ family.

The protein localises to the cytoplasm. The catalysed reaction is guanosine(1516) in 16S rRNA + S-adenosyl-L-methionine = N(2)-methylguanosine(1516) in 16S rRNA + S-adenosyl-L-homocysteine + H(+). In terms of biological role, specifically methylates the guanosine in position 1516 of 16S rRNA. The chain is Ribosomal RNA small subunit methyltransferase J from Buchnera aphidicola subsp. Acyrthosiphon pisum (strain 5A).